The chain runs to 406 residues: MVSTIHCDSLWYGADIVTMRGGKYHLIPQGAMAVTDGKIVWIGPYNELPRLSASREVIYSSGLITPGLIDCHTHLVFGGDRSAEFEQRLNGVSYAEIAANGGGIVSTVRATRNASEQQLLEQALFRLKPLLAEGVTCIEIKSGYGLSLESEIKMLRVARQLGELLPVTVKTTCLAAHALPPEFSGRADDYIDFVCDTIIPQVAKEKLADAVDAFCEHLAFSLAQVERVFLAAQQAGLPVKLHAEQLSSLHGSTLAAKFNAMSADHLEYATESDVRAMADAGTVAVLLPGAYYLLRETQCPPIELFRQYNVPMALASDANPGTSPALSLRLMLNMACTLFRMTPEEALAGVTCHAAQALGLQETQGTLETGKLANWVHWPLSHPAELAYWLGGQLPASVVFQGDARP.

Fe(3+) contacts are provided by H72 and H74. H72 and H74 together coordinate Zn(2+). Residues R81, Y144, and H177 each contribute to the 4-imidazolone-5-propanoate site. Y144 contributes to the N-formimidoyl-L-glutamate binding site. Residue H242 participates in Fe(3+) binding. H242 contacts Zn(2+). Residue Q245 coordinates 4-imidazolone-5-propanoate. Residue D317 participates in Fe(3+) binding. A Zn(2+)-binding site is contributed by D317. N-formimidoyl-L-glutamate-binding residues include N319 and G321. Position 322 (T322) interacts with 4-imidazolone-5-propanoate.

It belongs to the metallo-dependent hydrolases superfamily. HutI family. It depends on Zn(2+) as a cofactor. Requires Fe(3+) as cofactor.

It localises to the cytoplasm. It carries out the reaction 4-imidazolone-5-propanoate + H2O = N-formimidoyl-L-glutamate. Its pathway is amino-acid degradation; L-histidine degradation into L-glutamate; N-formimidoyl-L-glutamate from L-histidine: step 3/3. Functionally, catalyzes the hydrolytic cleavage of the carbon-nitrogen bond in imidazolone-5-propanoate to yield N-formimidoyl-L-glutamate. It is the third step in the universal histidine degradation pathway. The polypeptide is Imidazolonepropionase (Yersinia enterocolitica serotype O:8 / biotype 1B (strain NCTC 13174 / 8081)).